A 131-amino-acid polypeptide reads, in one-letter code: MKKHGVLNSEIAAVLASLGHTDTVVIADCGLPIPDGVKRIDLAVEIGKPSFLEVLQVVADDMAIEKVTLAEEVIINNAEVNKEIEQKLIEPAFEYVSHEQFKEHTKKAKAIIRTGEATPYANVILHAGVIF.

Residue H20 is the Proton donor of the active site. Residues D28, H98, and 120–122 (YAN) contribute to the substrate site.

This sequence belongs to the RbsD / FucU family. RbsD subfamily. As to quaternary structure, homodecamer.

It localises to the cytoplasm. It carries out the reaction beta-D-ribopyranose = beta-D-ribofuranose. It functions in the pathway carbohydrate metabolism; D-ribose degradation; D-ribose 5-phosphate from beta-D-ribopyranose: step 1/2. Functionally, catalyzes the interconversion of beta-pyran and beta-furan forms of D-ribose. The chain is D-ribose pyranase from Bacillus cereus (strain G9842).